The primary structure comprises 454 residues: Bifunctional protein GlmU (454 aa).

The tract at residues 1–226 (MALNVVILAA…AVEVEGANNR (226 aa)) is pyrophosphorylase. UDP-N-acetyl-alpha-D-glucosamine contacts are provided by residues 8–11 (LAAG), lysine 22, glutamine 73, 78–79 (GT), 100–102 (YGD), glycine 137, glutamate 151, asparagine 166, and asparagine 224. Aspartate 102 serves as a coordination point for Mg(2+). Mg(2+) is bound at residue asparagine 224. The linker stretch occupies residues 227–247 (VQLAQLERAYQARAAEKLMLE). The segment at 248 to 454 (GANLRDPARI…GWPRPVKLKK (207 aa)) is N-acetyltransferase. UDP-N-acetyl-alpha-D-glucosamine-binding residues include arginine 330 and lysine 348. Histidine 360 functions as the Proton acceptor in the catalytic mechanism. Residues tyrosine 363 and asparagine 374 each coordinate UDP-N-acetyl-alpha-D-glucosamine. Acetyl-CoA contacts are provided by residues alanine 377, 383–384 (NY), serine 402, alanine 420, and arginine 437.

It in the N-terminal section; belongs to the N-acetylglucosamine-1-phosphate uridyltransferase family. In the C-terminal section; belongs to the transferase hexapeptide repeat family. In terms of assembly, homotrimer. It depends on Mg(2+) as a cofactor.

The protein localises to the cytoplasm. The catalysed reaction is alpha-D-glucosamine 1-phosphate + acetyl-CoA = N-acetyl-alpha-D-glucosamine 1-phosphate + CoA + H(+). The enzyme catalyses N-acetyl-alpha-D-glucosamine 1-phosphate + UTP + H(+) = UDP-N-acetyl-alpha-D-glucosamine + diphosphate. It participates in nucleotide-sugar biosynthesis; UDP-N-acetyl-alpha-D-glucosamine biosynthesis; N-acetyl-alpha-D-glucosamine 1-phosphate from alpha-D-glucosamine 6-phosphate (route II): step 2/2. Its pathway is nucleotide-sugar biosynthesis; UDP-N-acetyl-alpha-D-glucosamine biosynthesis; UDP-N-acetyl-alpha-D-glucosamine from N-acetyl-alpha-D-glucosamine 1-phosphate: step 1/1. It functions in the pathway bacterial outer membrane biogenesis; LPS lipid A biosynthesis. Functionally, catalyzes the last two sequential reactions in the de novo biosynthetic pathway for UDP-N-acetylglucosamine (UDP-GlcNAc). The C-terminal domain catalyzes the transfer of acetyl group from acetyl coenzyme A to glucosamine-1-phosphate (GlcN-1-P) to produce N-acetylglucosamine-1-phosphate (GlcNAc-1-P), which is converted into UDP-GlcNAc by the transfer of uridine 5-monophosphate (from uridine 5-triphosphate), a reaction catalyzed by the N-terminal domain. The sequence is that of Bifunctional protein GlmU from Shewanella pealeana (strain ATCC 700345 / ANG-SQ1).